We begin with the raw amino-acid sequence, 400 residues long: Large envelope protein (400 aa).

An N-acetylmethionine modification is found at Met1. Disordered regions lie at residues 1–54 and 85–116; these read MGGW…HWPE and LTTVPAAPPPASTNRQSGRQPTPISPPLRDSH. The N-myristoyl glycine; by host moiety is linked to residue Gly2. A pre-S1 region spans residues 2–119; the sequence is GGWSSKPRQG…PPLRDSHPQA (118 aa). Positions 2–174 are pre-S; it reads GGWSSKPRQG…FSRTGDPAPN (173 aa). At 2 to 181 the chain is on the virion surface; in external conformation side; the sequence is GGWSSKPRQG…APNMENTTSG (180 aa). Over 2–253 the chain is Intravirion; in internal conformation; it reads GGWSSKPRQG…PGYRWMCLRR (252 aa). N-linked (GlcNAc...) asparagine glycosylation occurs at Trp4. Polar residues predominate over residues 96–106; that stretch reads STNRQSGRQPT. A pre-S2 region spans residues 120–174; the sequence is MQWNSTTFHQALLDPRVRGLYFPAGGSSSGTVNPVPTTASPISSIFSRTGDPAPN. The chain crosses the membrane as a helical span at residues 182–202; the sequence is FLGPLLVLQAGFFLLTRILTI. Residues 203-253 lie on the Intravirion; in external conformation side of the membrane; that stretch reads PQSLDSWWTSLNFLGGAPTCPGQNSQSPTSNHSPTSCPPICPGYRWMCLRR. A helical transmembrane segment spans residues 254 to 274; the sequence is FIIFLFILLLCLIFLLVLLDY. The Virion surface segment spans residues 275–348; sequence QGMLPVCPLL…WASVRFSWLS (74 aa). Asn320 carries N-linked (GlcNAc...) asparagine; by host glycosylation. The chain crosses the membrane as a helical span at residues 349-369; that stretch reads LLVPFVQWFAGLSPTVWLSVI. Residues 370–375 lie on the Intravirion side of the membrane; that stretch reads WMMWYW. Residues 376 to 398 form a helical membrane-spanning segment; the sequence is GPSLYNILSPFLPLLPIFFCLWV. Over 399-400 the chain is Virion surface; sequence YI.

This sequence belongs to the orthohepadnavirus major surface antigen family. In its internal form (Li-HBsAg), interacts with the capsid protein and with the isoform S. Interacts with host chaperone CANX. In terms of assembly, associates with host chaperone CANX through its pre-S2 N glycan; this association may be essential for isoform M proper secretion. As to quaternary structure, interacts with isoform L. Interacts with the antigens of satellite virus HDV (HDVAgs); this interaction is required for encapsidation of HDV genomic RNA. Isoform M is N-terminally acetylated by host at a ratio of 90%, and N-glycosylated by host at the pre-S2 region. In terms of processing, myristoylated.

The protein localises to the virion membrane. In terms of biological role, the large envelope protein exists in two topological conformations, one which is termed 'external' or Le-HBsAg and the other 'internal' or Li-HBsAg. In its external conformation the protein attaches the virus to cell receptors and thereby initiating infection. This interaction determines the species specificity and liver tropism. This attachment induces virion internalization predominantly through caveolin-mediated endocytosis. The large envelope protein also assures fusion between virion membrane and endosomal membrane. In its internal conformation the protein plays a role in virion morphogenesis and mediates the contact with the nucleocapsid like a matrix protein. Its function is as follows. The middle envelope protein plays an important role in the budding of the virion. It is involved in the induction of budding in a nucleocapsid independent way. In this process the majority of envelope proteins bud to form subviral lipoprotein particles of 22 nm of diameter that do not contain a nucleocapsid. This is Large envelope protein from Homo sapiens (Human).